Here is a 236-residue protein sequence, read N- to C-terminus: Small ribosomal subunit protein uS2c (236 aa).

This sequence belongs to the universal ribosomal protein uS2 family.

The protein localises to the plastid. It localises to the chloroplast. This is Small ribosomal subunit protein uS2c (rps2) from Guizotia abyssinica (Niger).